The chain runs to 1224 residues: WD repeat-containing protein 11 (1224 aa).

2 WD repeats span residues 59 to 108 and 111 to 154; these read KHKA…AQCE and EHAK…KLWK. 2 positions are modified to phosphoserine: S205 and S209. One copy of the WD 3 repeat lies at 354-393; sequence KTVRPFSMVCCPVNENAAALVVSDGRVMIWELKSAVCNRN. S402 and S406 each carry phosphoserine. WD repeat units lie at residues 471–510, 566–605, 708–745, 747–787, 793–831, and 893–940; these read RMCPPLTTKNIKMYQPLLAVGTSNGSVLVYHLTSGLLHKE, NDESAIEMIKVSHLKQYLAVVFRDKPLELWDVRTCTLLRE, GSMGSITCIAWKGDTLVLGDMDGNLNFWDLKGRVSRGI, THRS…MVSS, NVTFRILDVDWCTSDKVILASDDGCIRVLEMSMKSACFR, and SLSN…HSLS.

Component of the complex WDR11 composed of C17orf75, FAM91A1 and WDR11; FAM91A1 and WDR11 are required for proper location of the complex. Interacts (via the N-terminal and the central portion of the protein) with EMX1. Interacts with GLI3; the interaction associateS EMX1 with GLI3. Interacts with TBC1D23; this interaction may be indirect and recruits TBC1D23 to AP-1-derived vesicles. Ubiquitous.

Its subcellular location is the cytoplasm. The protein localises to the cytoskeleton. The protein resides in the cilium basal body. It is found in the nucleus. It localises to the cilium axoneme. Its subcellular location is the cytoplasmic vesicle. The protein localises to the golgi apparatus. The protein resides in the trans-Golgi network. Functionally, involved in the Hedgehog (Hh) signaling pathway, is essential for normal ciliogenesis. Regulates the proteolytic processing of GLI3 and cooperates with the transcription factor EMX1 in the induction of downstream Hh pathway gene expression and gonadotropin-releasing hormone production. WDR11 complex facilitates the tethering of Adaptor protein-1 complex (AP-1)-derived vesicles. WDR11 complex acts together with TBC1D23 to facilitate the golgin-mediated capture of vesicles generated using AP-1. This chain is WD repeat-containing protein 11 (WDR11), found in Homo sapiens (Human).